Consider the following 874-residue polypeptide: AP-1 complex subunit gamma-1 (874 aa).

Residues 761 to 873 (TVAKSHTVYT…QDQTDWAQPS (113 aa)) enclose the GAE domain.

The protein belongs to the adaptor complexes large subunit family. As to quaternary structure, adaptor protein complex 1 (AP-1) is a heterotetramer composed of two large adaptins (gamma-type subunit APL4 and beta-type subunit APL2), a medium adaptin (mu-type subunit APM1) and a small adaptin (sigma-type subunit APS1). AP-1 interacts with clathrin.

The protein resides in the cytoplasmic vesicle. The protein localises to the clathrin-coated vesicle membrane. Its subcellular location is the golgi apparatus. Adaptins are components of the adaptor complexes which link clathrin to receptors in coated vesicles. Clathrin-associated protein complexes are believed to interact with the cytoplasmic tails of membrane proteins, leading to their selection and concentration. The AP-1 complex interacts directly with clathrin. Required for apical growth extension. This Mycosarcoma maydis (Corn smut fungus) protein is AP-1 complex subunit gamma-1 (APL4).